The following is a 133-amino-acid chain: Phosphoribosyl-AMP cyclohydrolase (133 aa).

D90 is a binding site for Mg(2+). C91 contacts Zn(2+). 2 residues coordinate Mg(2+): D92 and D94. Residues C107 and C114 each coordinate Zn(2+).

This sequence belongs to the PRA-CH family. In terms of assembly, homodimer. Requires Mg(2+) as cofactor. It depends on Zn(2+) as a cofactor.

It localises to the cytoplasm. It catalyses the reaction 1-(5-phospho-beta-D-ribosyl)-5'-AMP + H2O = 1-(5-phospho-beta-D-ribosyl)-5-[(5-phospho-beta-D-ribosylamino)methylideneamino]imidazole-4-carboxamide. It functions in the pathway amino-acid biosynthesis; L-histidine biosynthesis; L-histidine from 5-phospho-alpha-D-ribose 1-diphosphate: step 3/9. Functionally, catalyzes the hydrolysis of the adenine ring of phosphoribosyl-AMP. The polypeptide is Phosphoribosyl-AMP cyclohydrolase (Streptomyces avermitilis (strain ATCC 31267 / DSM 46492 / JCM 5070 / NBRC 14893 / NCIMB 12804 / NRRL 8165 / MA-4680)).